We begin with the raw amino-acid sequence, 901 residues long: MQTHEIRKRFLDHFVKAGHTEVPSASVILDDPNLLFVNAGMVQFVPFFLGQRTPPYATATSIQKCIRTPDIDEVGITTRHNTFFQMAGNFSFGDYFKRGAIELAWALLTNSVADGGYGLDPEKLWATVYLDDDEAAGLWREVAGLPADRIQRRGMADNYWSMGIPGPCGPSSEIYYDRGPDYGPEGGPVVNEDRYLEIWNLVFMQNERGEGTTKEDYEILGPLPRKNIDTGMGVERVALILQGVPNVYETDLLRPIIDLVAARAPRGYDQGNHADDVRYRIIADHSRTAAILIADGVSPGNDGRGYVLRRLLRRVIRSAKLLNIDTAIVGDLMATVRDAMGPSYPELASDFDRINRIAVAEETAFNRTLASGSRLFDEVAGTTRSSGVSVVSGSDAFTLHDTYGFPIELTLEMASEAGLTVDEGGFRELMAQQRRRAKADAAARKHAHADLTAYRELVDAGPTEFTGFDELTSEARILGIFVDGKRVPVVAHGQAVDADRVELVLDRTPLYAESGGQIADVGTISGTGSGSSARAAVTDVQKIAKTLWLHRVNVESGEFVEGDGVVAAADAGWRKGATQGHSGTHMVHAALRQVLGPNAVQAGSLNRPGYLRFDFNWQGPLTEEQRGQIEEVTNQAVQADFAVHTFTEQLEKAKAMGAMALFGESYPDEVRVVEIGGPFSIELCGGTHVATSAQIGPVTILGESSIGSGVRRVEAYVGLDSFRHLAKERALMAGLASSLKVPSEEVPARVASLVERLKAAEKELERARLASVRAAAVNAAAGAERIGNVWLVAQRMSSEMTPADLRTLVGDIRGKLGSDPAVVALIAAPAGGESSTVPYVVAANRAAQGLGLGANELIKHLATAVDGRGGGKADLAQGSGKKPAGIDAALEALRAEIARVG.

4 residues coordinate Zn(2+): H581, H585, C684, and H688.

This sequence belongs to the class-II aminoacyl-tRNA synthetase family. The cofactor is Zn(2+).

The protein localises to the cytoplasm. The enzyme catalyses tRNA(Ala) + L-alanine + ATP = L-alanyl-tRNA(Ala) + AMP + diphosphate. Its function is as follows. Catalyzes the attachment of alanine to tRNA(Ala) in a two-step reaction: alanine is first activated by ATP to form Ala-AMP and then transferred to the acceptor end of tRNA(Ala). Also edits incorrectly charged Ser-tRNA(Ala) and Gly-tRNA(Ala) via its editing domain. The sequence is that of Alanine--tRNA ligase from Mycobacterium marinum (strain ATCC BAA-535 / M).